A 325-amino-acid chain; its full sequence is GMP reductase (325 aa).

Cys-174 serves as the catalytic Thioimidate intermediate. Residue 203–226 (IIADGGIRTHGDIAKSIRFGATMV) coordinates NADP(+).

It belongs to the IMPDH/GMPR family. GuaC type 2 subfamily.

The catalysed reaction is IMP + NH4(+) + NADP(+) = GMP + NADPH + 2 H(+). Functionally, catalyzes the irreversible NADPH-dependent deamination of GMP to IMP. It functions in the conversion of nucleobase, nucleoside and nucleotide derivatives of G to A nucleotides, and in maintaining the intracellular balance of A and G nucleotides. The polypeptide is GMP reductase (Helicobacter pylori (strain J99 / ATCC 700824) (Campylobacter pylori J99)).